The following is a 161-amino-acid chain: Protein ilm1 (161 aa).

Residues 1-6 lie on the Cytoplasmic side of the membrane; the sequence is MLFSFR. A helical membrane pass occupies residues 7–27; that stretch reads AIVLFYCCMLTFAGIGFLWNP. The Lumenal portion of the chain corresponds to 28 to 56; sequence KFVVESGLVALIGASMEVKPLIVTQDNLS. A helical transmembrane segment spans residues 57–77; it reads TLALSGLVFLILGMIYTISLL. The Cytoplasmic segment spans residues 78-81; the sequence is QSNF. The helical transmembrane segment at 82–102 threads the bilayer; that stretch reads LFFSGITPIRAIFDFILTGFI. Residues 103-112 are Lumenal-facing; that stretch reads YLKKEHIASN. Residues 113–133 traverse the membrane as a helical segment; sequence SLTFTFAFCDLMWQFWMFAAM. The Cytoplasmic portion of the chain corresponds to 134–161; the sequence is SEERAKYLKNQKKAEELAARKAREVEES.

This sequence belongs to the ILM1 family.

The protein localises to the endoplasmic reticulum. It localises to the membrane. This Schizosaccharomyces pombe (strain 972 / ATCC 24843) (Fission yeast) protein is Protein ilm1.